The primary structure comprises 216 residues: Regulator of G-protein signaling 19 (216 aa).

Over residues 1–19 the composition is skewed to basic and acidic residues; that stretch reads MPTPHEAEKQHTGPEEADR. Positions 1–30 are disordered; sequence MPTPHEAEKQHTGPEEADRPPSMSSHDAAP. 2 positions are modified to phosphoserine: serine 24 and serine 97. Residues 90–206 form the RGS domain; the sequence is SFDKLMHSPT…LTSPTYRSLL (117 aa). Serine 151 bears the Phosphoserine; by MAPK1 and MAPK3 mark. The interval 207 to 216 is interaction with GIPC; it reads LQGAPQSSEA.

In terms of assembly, interacts with GIPC PDZ domain. Interacts with GNAO1. Fatty acylated. Heavily palmitoylated in the cysteine string motif. Post-translationally, phosphorylated, mainly on serine residues.

It localises to the membrane. Its function is as follows. Inhibits signal transduction by increasing the GTPase activity of G protein alpha subunits thereby driving them into their inactive GDP-bound form. Binds to G-alpha subfamily 1 members, with the order G(i)a3 &gt; G(i)a1 &gt; G(o)a &gt;&gt; G(z)a/G(i)a2. Activity on G(z)-alpha is inhibited by phosphorylation and palmitoylation of the G-protein. This Mus musculus (Mouse) protein is Regulator of G-protein signaling 19 (Rgs19).